We begin with the raw amino-acid sequence, 1387 residues long: DNA-directed RNA polymerase subunit beta'' (1387 aa).

Residues C224, C295, C302, and C305 each contribute to the Zn(2+) site.

It belongs to the RNA polymerase beta' chain family. RpoC2 subfamily. As to quaternary structure, in plastids the minimal PEP RNA polymerase catalytic core is composed of four subunits: alpha, beta, beta', and beta''. When a (nuclear-encoded) sigma factor is associated with the core the holoenzyme is formed, which can initiate transcription. Zn(2+) serves as cofactor.

It localises to the plastid. Its subcellular location is the chloroplast. It catalyses the reaction RNA(n) + a ribonucleoside 5'-triphosphate = RNA(n+1) + diphosphate. DNA-dependent RNA polymerase catalyzes the transcription of DNA into RNA using the four ribonucleoside triphosphates as substrates. The polypeptide is DNA-directed RNA polymerase subunit beta'' (Panax ginseng (Korean ginseng)).